Reading from the N-terminus, the 446-residue chain is Histidine--tRNA ligase (446 aa).

This sequence belongs to the class-II aminoacyl-tRNA synthetase family. In terms of assembly, homodimer.

The protein localises to the cytoplasm. It carries out the reaction tRNA(His) + L-histidine + ATP = L-histidyl-tRNA(His) + AMP + diphosphate + H(+). The protein is Histidine--tRNA ligase of Paraburkholderia xenovorans (strain LB400).